Here is a 408-residue protein sequence, read N- to C-terminus: tRNA-specific 2-thiouridylase MnmA (408 aa).

Residues 20-27 (AMSGGVDS) and Leu-46 contribute to the ATP site. The Nucleophile role is filled by Cys-114. The cysteines at positions 114 and 210 are disulfide-linked. Gly-138 contributes to the ATP binding site. The segment at 160–162 (RDQ) is interaction with tRNA. The active-site Cysteine persulfide intermediate is Cys-210.

It belongs to the MnmA/TRMU family.

It localises to the cytoplasm. The catalysed reaction is S-sulfanyl-L-cysteinyl-[protein] + uridine(34) in tRNA + AH2 + ATP = 2-thiouridine(34) in tRNA + L-cysteinyl-[protein] + A + AMP + diphosphate + H(+). Functionally, catalyzes the 2-thiolation of uridine at the wobble position (U34) of tRNA, leading to the formation of s(2)U34. This is tRNA-specific 2-thiouridylase MnmA from Bartonella quintana (strain Toulouse) (Rochalimaea quintana).